We begin with the raw amino-acid sequence, 165 residues long: Thiol peroxidase (165 aa).

A Thioredoxin domain is found at 18–164; sequence RKVGDKAPNF…YEAAIEAAKK (147 aa). The Cysteine sulfenic acid (-SOH) intermediate role is filled by C60. A disulfide bridge connects residues C60 and C94.

The protein belongs to the peroxiredoxin family. Tpx subfamily. As to quaternary structure, homodimer.

The enzyme catalyses a hydroperoxide + [thioredoxin]-dithiol = an alcohol + [thioredoxin]-disulfide + H2O. Thiol-specific peroxidase that catalyzes the reduction of hydrogen peroxide and organic hydroperoxides to water and alcohols, respectively. Plays a role in cell protection against oxidative stress by detoxifying peroxides. This Listeria monocytogenes serovar 1/2a (strain ATCC BAA-679 / EGD-e) protein is Thiol peroxidase.